A 115-amino-acid polypeptide reads, in one-letter code: NADH-ubiquinone oxidoreductase chain 3 (115 aa).

3 consecutive transmembrane segments (helical) span residues Leu-4–Leu-24, Phe-55–Ile-75, and Met-87–Ile-107.

The protein belongs to the complex I subunit 3 family. As to quaternary structure, core subunit of respiratory chain NADH dehydrogenase (Complex I) which is composed of 45 different subunits. Interacts with TMEM186. Interacts with TMEM242.

The protein localises to the mitochondrion inner membrane. The enzyme catalyses a ubiquinone + NADH + 5 H(+)(in) = a ubiquinol + NAD(+) + 4 H(+)(out). Functionally, core subunit of the mitochondrial membrane respiratory chain NADH dehydrogenase (Complex I) which catalyzes electron transfer from NADH through the respiratory chain, using ubiquinone as an electron acceptor. Essential for the catalytic activity of complex I. This chain is NADH-ubiquinone oxidoreductase chain 3, found in Neotoma floridana (Eastern woodrat).